Reading from the N-terminus, the 92-residue chain is Co-chaperonin GroES (92 aa).

The protein belongs to the GroES chaperonin family. As to quaternary structure, heptamer of 7 subunits arranged in a ring. Interacts with the chaperonin GroEL.

The protein localises to the cytoplasm. Together with the chaperonin GroEL, plays an essential role in assisting protein folding. The GroEL-GroES system forms a nano-cage that allows encapsulation of the non-native substrate proteins and provides a physical environment optimized to promote and accelerate protein folding. GroES binds to the apical surface of the GroEL ring, thereby capping the opening of the GroEL channel. The sequence is that of Co-chaperonin GroES from Thermotoga neapolitana.